A 183-amino-acid polypeptide reads, in one-letter code: MATTMLNRSVIVNKEVAKTPNFPRATKNNKGFASNAAVQKCRDMMVWQPFNNKMFETFSYLPPLTDEQISKQVDYILANSWTPCLEFAASDQAYAGNENCIRMGPVSSTYQDNRYWTMWKLPMFGCTDGSQVLSEIQACTKAFPDAYIRLVCFDANRQVQISGFLVHRPPSATDYRLPADRQV.

The N-terminal 43 residues, 1 to 43 (MATTMLNRSVIVNKEVAKTPNFPRATKNNKGFASNAAVQKCRD), are a transit peptide targeting the chloroplast.

Belongs to the RuBisCO small chain family. In terms of assembly, heterohexadecamer of 8 large and 8 small subunits.

The protein localises to the plastid. It localises to the chloroplast. Functionally, ruBisCO catalyzes two reactions: the carboxylation of D-ribulose 1,5-bisphosphate, the primary event in carbon dioxide fixation, as well as the oxidative fragmentation of the pentose substrate. Both reactions occur simultaneously and in competition at the same active site. Although the small subunit is not catalytic it is essential for maximal activity. This Acetabularia peniculus (Green alga) protein is Ribulose bisphosphate carboxylase small subunit, chloroplastic 3.